The primary structure comprises 595 residues: MLLTTGHARARPEQQQASADEPLEAKPEDGHSLTAPRPADDELATVAPTTTPVPAVAITQGATTGAATEATHSQPVVTAVPATSSTSTSTTVPAPLLPAAPEQPEYLKHCFYADEHLCMYGHDGQGNEAPDVLGHISTTPESDSQGIGLQVNASQGNSQNLERNANSCQCHEHPAKANSWYCCNISQMSMISSCSNISKWTNLHVRNLTVRTIDLSNPIFRSLQSLAVTDGNITRLINAFPRHSALKCLNISNNNISEIPSRMFKDVPHLEFFGMSRNNLSLVPHHNQNKNITVDISGNMRMLCNPLNEIINNDSFNFVNPKHSYCLYNATHEWFQSTDLVSVEQLESTKRCMTKCPVIPNYGSCKCRFESIMIIQDDQSKPKCHVDCSNLGLVELPPRLPDNTFVLNITNNKITSLGDHFQTNPTYHNINRLVADNNQISSIYEFEGTKFIENFQRIYMRNNSLSKIPEYFLNNALMDTGRRIYLAGNKLQCDCNSAKTLQNWLKERSTDIPDYMEIRCRNIPQSVIELQEAKLCQSPPDWTDYIYYLIAAEVILLLGLITKVSYDYWVFKTSGYLPWPASKMPKLPCDWLCES.

2 disordered regions span residues Met1 to Glu42 and Thr64 to Pro98. Residues Asn250 and Asn255 are each glycosylated (N-linked (GlcNAc...) asparagine). Residues Glu347–Asp402 enclose the LRRNT domain. 3 LRR repeats span residues Asn403 to Asn424, Asn429 to Lys450, and Asn454 to Asn475. An LRRCT domain is found at Asn489–Ser538.

In terms of biological role, has a role in the ecdysone induced cascade; probably indirect control of 'late' ecdysone genes. The chain is Protein halfway (hfw) from Drosophila pseudoobscura pseudoobscura (Fruit fly).